Reading from the N-terminus, the 143-residue chain is Nucleoside diphosphate kinase (143 aa).

K11, F59, R87, T93, R104, and N114 together coordinate ATP. The active-site Pros-phosphohistidine intermediate is the H117.

It belongs to the NDK family. As to quaternary structure, homotetramer. The cofactor is Mg(2+).

The protein localises to the cytoplasm. The enzyme catalyses a 2'-deoxyribonucleoside 5'-diphosphate + ATP = a 2'-deoxyribonucleoside 5'-triphosphate + ADP. It carries out the reaction a ribonucleoside 5'-diphosphate + ATP = a ribonucleoside 5'-triphosphate + ADP. Major role in the synthesis of nucleoside triphosphates other than ATP. The ATP gamma phosphate is transferred to the NDP beta phosphate via a ping-pong mechanism, using a phosphorylated active-site intermediate. In Shewanella frigidimarina (strain NCIMB 400), this protein is Nucleoside diphosphate kinase.